Reading from the N-terminus, the 254-residue chain is Ferritin-1, chloroplastic (254 aa).

A chloroplast-targeting transit peptide spans 1–47 (MASKALSSFTAKPAVSLLPHGVSSSASPSVMSLSFSRHTGGRGVVAA). The segment at 48–86 (SSTVDTNNMPMTGVVFQPFEEVKKADLAIPITSNASLAR) is extension peptide (EP). The Ferritin-like diiron domain maps to 87 to 240 (QRYADSSEAA…DFITQLRMVG (154 aa)). Fe cation contacts are provided by Glu-104, Glu-139, His-142, Glu-188, and Gln-222.

This sequence belongs to the ferritin family. In terms of assembly, oligomer of 24 subunits. There are two types of subunits: L (light) chain and H (heavy) chain. The major chain can be light or heavy, depending on the species and tissue type. The functional molecule forms a roughly spherical shell with a diameter of 12 nm and contains a central cavity into which the insoluble mineral iron core is deposited.

It is found in the plastid. The protein localises to the chloroplast. It carries out the reaction 4 Fe(2+) + O2 + 4 H(+) = 4 Fe(3+) + 2 H2O. Its function is as follows. Stores iron in a soluble, non-toxic, readily available form. Important for iron homeostasis. Has ferroxidase activity. Iron is taken up in the ferrous form and deposited as ferric hydroxides after oxidation. The polypeptide is Ferritin-1, chloroplastic (LSC30) (Brassica napus (Rape)).